The primary structure comprises 513 residues: Histidine ammonia-lyase (513 aa).

The segment at residues 144–146 (ASG) is a cross-link (5-imidazolinone (Ala-Gly)). Ser145 is subject to 2,3-didehydroalanine (Ser).

Belongs to the PAL/histidase family. In terms of processing, contains an active site 4-methylidene-imidazol-5-one (MIO), which is formed autocatalytically by cyclization and dehydration of residues Ala-Ser-Gly.

The protein localises to the cytoplasm. The catalysed reaction is L-histidine = trans-urocanate + NH4(+). The protein operates within amino-acid degradation; L-histidine degradation into L-glutamate; N-formimidoyl-L-glutamate from L-histidine: step 1/3. The chain is Histidine ammonia-lyase from Streptococcus pyogenes serotype M3 (strain ATCC BAA-595 / MGAS315).